The primary structure comprises 185 residues: MLTLASKLKRDDGVRGPRASNPASDSTRRVSVRDKLLVKEVAELEANLPCTCKVNFPDPNKLHYFQLTVIPDEGYYQGGKFQFEIEVPDAYNMVPPKVKCLTRIWHPNITETGEICLSLLREHSIDGTGWAPTRTLKDVVWGLNSLFTDLLNFDDPLNIEAAEHHLRDKEDFRNKVEDYIKRYAR.

The interval 1-29 (MLTLASKLKRDDGVRGPRASNPASDSTRR) is interaction with UBA3. The tract at residues 11–30 (DDGVRGPRASNPASDSTRRV) is disordered. Positions 32 to 185 (VRDKLLVKEV…VEDYIKRYAR (154 aa)) constitute a UBC core domain. Cys116 serves as the catalytic Glycyl thioester intermediate.

Belongs to the ubiquitin-conjugating enzyme family. UBE2F subfamily.

The enzyme catalyses [E1 NEDD8-activating enzyme]-S-[NEDD8 protein]-yl-L-cysteine + [E2 NEDD8-conjugating enzyme]-L-cysteine = [E1 NEDD8-activating enzyme]-L-cysteine + [E2 NEDD8-conjugating enzyme]-S-[NEDD8-protein]-yl-L-cysteine.. The protein operates within protein modification; protein neddylation. Functionally, accepts the ubiquitin-like protein NEDD8 from the UBA3-NAE1 E1 complex and catalyzes its covalent attachment to other proteins. Together with the E3 ubiquitin ligase RNF7/RBX2, specifically neddylates cullin-5 (CUL5). Does not neddylate CUL1, CUL2, CUL3, CUL4A or CUL4B. In Gallus gallus (Chicken), this protein is NEDD8-conjugating enzyme UBE2F (UBE2F).